A 130-amino-acid chain; its full sequence is Large ribosomal subunit protein bL17 (130 aa).

The protein belongs to the bacterial ribosomal protein bL17 family. Part of the 50S ribosomal subunit. Contacts protein L32.

The protein is Large ribosomal subunit protein bL17 of Shewanella pealeana (strain ATCC 700345 / ANG-SQ1).